The following is a 146-amino-acid chain: Large ribosomal subunit protein uL15 (146 aa).

A disordered region spans residues 1–59 (MRLEELKAPAGANKRTKRVGRGTGSGHGKTSTRGHKGQKSRSGGGVRPGFEGGQMPLQR). A compositionally biased stretch (basic residues) spans 30-39 (TSTRGHKGQK). Residues 42 to 52 (SGGGVRPGFEG) show a composition bias toward gly residues.

The protein belongs to the universal ribosomal protein uL15 family. As to quaternary structure, part of the 50S ribosomal subunit.

Its function is as follows. Binds to the 23S rRNA. This Syntrophomonas wolfei subsp. wolfei (strain DSM 2245B / Goettingen) protein is Large ribosomal subunit protein uL15.